Consider the following 481-residue polypeptide: Dual specificity protein kinase CLK4 (481 aa).

Disordered regions lie at residues Met-1 to His-46 and Ser-102 to Glu-143. Positions His-8–Arg-24 are enriched in basic and acidic residues. 2 stretches are compositionally biased toward basic residues: residues Gly-25–His-34 and Val-106–Ser-136. Phosphoserine is present on residues Ser-136 and Ser-138. Residues Tyr-159–Phe-475 enclose the Protein kinase domain. Residues Leu-165–Val-173 and Lys-189 contribute to the ATP site. The active-site Proton acceptor is Asp-286.

Belongs to the protein kinase superfamily. CMGC Ser/Thr protein kinase family. Lammer subfamily. In terms of assembly, interacts with UBL5. Post-translationally, autophosphorylates on all three types of residues. As to expression, expressed in liver, kidney, heart, muscle, brain and endothelial cells.

The protein resides in the nucleus. It carries out the reaction L-seryl-[protein] + ATP = O-phospho-L-seryl-[protein] + ADP + H(+). It catalyses the reaction L-threonyl-[protein] + ATP = O-phospho-L-threonyl-[protein] + ADP + H(+). The enzyme catalyses L-tyrosyl-[protein] + ATP = O-phospho-L-tyrosyl-[protein] + ADP + H(+). With respect to regulation, TG003 inhibits its kinase activity and affects the regulation of alternative splicing mediated by phosphorylation of SR proteins. Dual specificity kinase acting on both serine/threonine and tyrosine-containing substrates. Phosphorylates serine- and arginine-rich (SR) proteins of the spliceosomal complex and may be a constituent of a network of regulatory mechanisms that enable SR proteins to control RNA splicing. Phosphorylates SRSF1 and SRSF3. Required for the regulation of alternative splicing of MAPT/TAU. Regulates the alternative splicing of tissue factor (F3) pre-mRNA in endothelial cells. The chain is Dual specificity protein kinase CLK4 (CLK4) from Homo sapiens (Human).